An 881-amino-acid chain; its full sequence is Cell wall protein PRY3 (881 aa).

An N-terminal signal peptide occupies residues 1–18 (MLEFPISVLLGCLVAVKA). Residues 30–144 (LNEHNKFRAL…TWNNYIVCSY (115 aa)) form the SCP domain. Residue Asn101 is glycosylated (N-linked (GlcNAc...) asparagine). A disordered region spans residues 262–313 (VVSSDATSSTTTTSSVATSSSTTSSDPTSSTAAASSSDPASSSAAASSSAST). N-linked (GlcNAc...) asparagine glycosylation occurs at Asn360. Disordered stretches follow at residues 381–400 (AADDIQGSTSKEATSSVSEH) and 453–494 (VSST…NSAA). Residues 386–400 (QGSTSKEATSSVSEH) are compositionally biased toward polar residues. Asn488, Asn535, Asn547, and Asn569 each carry an N-linked (GlcNAc...) asparagine glycan. The disordered stretch occupies residues 579-611 (IDPTLDPTDNSASPTDNAKHTSTYGSSSTGASL). Over residues 585 to 594 (PTDNSASPTD) the composition is skewed to polar residues. Residues 599 to 611 (TSTYGSSSTGASL) are compositionally biased toward low complexity. The N-linked (GlcNAc...) asparagine glycan is linked to Asn625. Disordered regions lie at residues 758 to 788 (LASDFATSEKPNEPTSVKSTSNEGTSSTTTT) and 800 to 830 (PSSTSLGARTTTGSNGRSTTSQQDGSAMHQP). 2 stretches are compositionally biased toward low complexity: residues 776-788 (STSNEGTSSTTTT) and 808-820 (RTTTGSNGRSTTS). The segment covering 821 to 830 (QQDGSAMHQP) has biased composition (polar residues). A lipid anchor (GPI-anchor amidated glycine) is attached at Gly853. A propeptide spans 854–881 (AATPLSIFQCNSLAGTIAAFVVAVLFAF) (removed in mature form).

This sequence belongs to the CRISP family. Post-translationally, the GPI-anchor is attached to the protein in the endoplasmic reticulum and serves to target the protein to the cell surface. There, the glucosamine-inositol phospholipid moiety is cleaved off and the GPI-modified mannoprotein is covalently attached via its lipidless GPI glycan remnant to the 1,6-beta-glucan of the outer cell wall layer.

It localises to the secreted. The protein localises to the cell wall. The protein resides in the membrane. In terms of biological role, the full-length isoform (isoform Long) is a daughter cell-specific cell wall protein required for efficient export of lipids such as acetylated sterols. Acts in detoxification of hydrophobic compounds. Involved in tolerance to organic solvents such as dimethyl sulfoxide (DMSO). Also plays a role as an inhibitor of mating. STE12 is utilized as a repressor of full-length PRY3 transcription, ensuring efficient mating. Its function is as follows. There is no evidence that production of the short PRY3 transcript (isoform Short) is anything more than an adventitious by-product of the mechanism responsible for the repression of the full-length transcript. Moreover, no disadvantage is detectable for cells unable to make the short transcript. The protein is Cell wall protein PRY3 (PRY3) of Saccharomyces cerevisiae (strain ATCC 204508 / S288c) (Baker's yeast).